We begin with the raw amino-acid sequence, 407 residues long: Multifunctional CCA protein (407 aa).

Positions 8 and 11 each coordinate ATP. Residues Gly8 and Arg11 each coordinate CTP. The Mg(2+) site is built by Asp21 and Asp23. Arg91, Arg137, and Arg140 together coordinate ATP. The CTP site is built by Arg91, Arg137, and Arg140. One can recognise an HD domain in the interval 225-326 (CGDHVMRVLD…LRLLKDCDAL (102 aa)).

It belongs to the tRNA nucleotidyltransferase/poly(A) polymerase family. Bacterial CCA-adding enzyme type 1 subfamily. In terms of assembly, monomer. Can also form homodimers and oligomers. It depends on Mg(2+) as a cofactor. Requires Ni(2+) as cofactor.

It catalyses the reaction a tRNA precursor + 2 CTP + ATP = a tRNA with a 3' CCA end + 3 diphosphate. The catalysed reaction is a tRNA with a 3' CCA end + 2 CTP + ATP = a tRNA with a 3' CCACCA end + 3 diphosphate. Catalyzes the addition and repair of the essential 3'-terminal CCA sequence in tRNAs without using a nucleic acid template. Adds these three nucleotides in the order of C, C, and A to the tRNA nucleotide-73, using CTP and ATP as substrates and producing inorganic pyrophosphate. tRNA 3'-terminal CCA addition is required both for tRNA processing and repair. Also involved in tRNA surveillance by mediating tandem CCA addition to generate a CCACCA at the 3' terminus of unstable tRNAs. While stable tRNAs receive only 3'-terminal CCA, unstable tRNAs are marked with CCACCA and rapidly degraded. The protein is Multifunctional CCA protein of Chromobacterium violaceum (strain ATCC 12472 / DSM 30191 / JCM 1249 / CCUG 213 / NBRC 12614 / NCIMB 9131 / NCTC 9757 / MK).